We begin with the raw amino-acid sequence, 230 residues long: MDDKSYYEEIESILRQILQPIEKISFSTFIRVVSGYKIIPIDLSKKEDKELINDLAKACNEVIEEIKKTGGVKTKEGKTPKRVNEVGNHIEHYVKDVLNKYGYAITPKTKKGKQKSTGYPDIEFWYKGKKERDGRVVYIEIKTFNEKNINSSHRTFYASPSKDEEGVKIRYDAPHLCLSFKIEKLGRDYYATGFKIIDLSKLKGGIKREFNASNRELYKKDLIIYEKDLK.

The enzyme catalyses Endonucleolytic cleavage of DNA to give specific double-stranded fragments with terminal 5'-phosphates.. Its function is as follows. A P subtype restriction enzyme that recognizes the double-stranded sequence 5'-GTAC-3'; the cleavage site is unknown. The protein is Type II restriction enzyme MjaV (mjaVR) of Methanocaldococcus jannaschii (strain ATCC 43067 / DSM 2661 / JAL-1 / JCM 10045 / NBRC 100440) (Methanococcus jannaschii).